Here is a 29-residue protein sequence, read N- to C-terminus: MDIVSLAWAVLMVVFTFSLSLVVWGRSGL.

The helical transmembrane segment at 3-23 (IVSLAWAVLMVVFTFSLSLVV) threads the bilayer.

Belongs to the PetN family. In terms of assembly, the 4 large subunits of the cytochrome b6-f complex are cytochrome b6, subunit IV (17 kDa polypeptide, PetD), cytochrome f and the Rieske protein, while the 4 small subunits are PetG, PetL, PetM and PetN. The complex functions as a dimer.

Its subcellular location is the plastid. It localises to the chloroplast thylakoid membrane. Functionally, component of the cytochrome b6-f complex, which mediates electron transfer between photosystem II (PSII) and photosystem I (PSI), cyclic electron flow around PSI, and state transitions. The polypeptide is Cytochrome b6-f complex subunit 8 (Drimys granadensis).